A 305-amino-acid polypeptide reads, in one-letter code: Glutaminase 2 (305 aa).

Residues Ser-61, Asn-113, Glu-158, Asn-165, Tyr-189, Tyr-241, and Val-259 each contribute to the substrate site.

This sequence belongs to the glutaminase family. Homotetramer.

The enzyme catalyses L-glutamine + H2O = L-glutamate + NH4(+). This chain is Glutaminase 2, found in Clostridium perfringens (strain 13 / Type A).